A 302-amino-acid chain; its full sequence is Ribostamycin:4-(gamma-L-glutamylamino)-(S)-2-hydroxybutanoyl-[BtrI acyl-carrier protein] 4-(gamma-L-glutamylamino)-(S)-2-hydroxybutanoate transferase (302 aa).

It catalyses the reaction 4-(gamma-L-glutamylamino)-(2S)-2-hydroxybutanoyl-[BtrI ACP] + ribostamycin = gamma-L-glutamyl-butirosin B + holo-[BtrI ACP] + H(+). It functions in the pathway antibiotic biosynthesis; butirosin biosynthesis. In terms of biological role, aminoglycoside acyltransferase that attaches the (S)-4-amino-2-hydroxybutyrate (AHBA) side chain from the acyl carrier protein BtrI to the aminoglycoside ribostamycin in the biosynthetic pathway of butirosin. The AHBA side chain protects the antibiotic from several common resistance mechanisms. The polypeptide is Ribostamycin:4-(gamma-L-glutamylamino)-(S)-2-hydroxybutanoyl-[BtrI acyl-carrier protein] 4-(gamma-L-glutamylamino)-(S)-2-hydroxybutanoate transferase (btrH) (Niallia circulans (Bacillus circulans)).